We begin with the raw amino-acid sequence, 708 residues long: Nicastrin (708 aa).

A signal peptide spans 1 to 34 (MATARGGSGPDPGSRGLLLLSFSVVLAGLCGGNS). Residues 35–668 (VERKIYIPLN…IFLIASKELE (634 aa)) lie on the Lumenal side of the membrane. N-linked (GlcNAc...) asparagine glycans are attached at residues Asn44, Asn54, and Asn128. The cysteines at positions 49 and 61 are disulfide-linked. Cys139 and Cys158 are oxidised to a cystine. Residues Asn186 and Asn203 are each glycosylated (N-linked (GlcNAc...) asparagine). Disulfide bonds link Cys194–Cys212 and Cys229–Cys247. N-linked (GlcNAc...) asparagine glycosylation is found at Asn263, Asn386, Asn434, Asn463, Asn507, Asn529, Asn561, Asn572, Asn579, Asn593, and Asn611. Cysteines 585 and 619 form a disulfide. The helical transmembrane segment at 669–689 (FITLIVGFSILVFSLIVTYCI) threads the bilayer. At 690–708 (NAKADVLFVAPREPGAVSY) the chain is on the cytoplasmic side.

This sequence belongs to the nicastrin family. Component of the gamma-secretase complex. The functional gamma-secretase complex is composed of at least four polypeptides: a presenilin homodimer (PSEN1 or PSEN2), nicastrin (NCSTN), APH1 (APH1A or APH1B) and PEN2. Binds to proteolytic processed C-terminal fragments C83 and C99 of the amyloid precursor protein (APP). Interacts with PSEN1 and PSEN2. Post-translationally, N-glycosylated.

It localises to the membrane. It is found in the cytoplasmic vesicle membrane. Its subcellular location is the melanosome. Essential subunit of the gamma-secretase complex, an endoprotease complex that catalyzes the intramembrane cleavage of integral membrane proteins such as Notch receptors and APP (amyloid-beta precursor protein). The gamma-secretase complex plays a role in Notch and Wnt signaling cascades and regulation of downstream processes via its role in processing key regulatory proteins, and by regulating cytosolic CTNNB1 levels. The chain is Nicastrin (Ncstn) from Rattus norvegicus (Rat).